The sequence spans 20 residues: Brevinin-1SPb (20 aa).

A disulfide bridge links Cys14 with Cys20.

In terms of tissue distribution, expressed by the skin glands.

The protein resides in the secreted. Antimicrobial peptide with activity against Gram-negative and Gram-positive bacteria (MIC=50 uM against E.coli, MIC=6 uM against S.aureus) and fungi (MIC=13 uM against C.albicans). Shows hemolytic activity on human erythrocytes (HC(50)=25 uM). The polypeptide is Brevinin-1SPb (Lithobates septentrionalis (Mink frog)).